A 337-amino-acid chain; its full sequence is Probable deoxyhypusine synthase (337 aa).

Lysine 308 acts as the Nucleophile in catalysis.

This sequence belongs to the deoxyhypusine synthase family. The cofactor is NAD(+).

The catalysed reaction is [eIF5A protein]-L-lysine + spermidine = [eIF5A protein]-deoxyhypusine + propane-1,3-diamine. It functions in the pathway protein modification; eIF5A hypusination. Its function is as follows. Catalyzes the NAD-dependent oxidative cleavage of spermidine and the subsequent transfer of the butylamine moiety of spermidine to the epsilon-amino group of a specific lysine residue of the eIF-5A precursor protein to form the intermediate deoxyhypusine residue. The polypeptide is Probable deoxyhypusine synthase (Thermococcus kodakarensis (strain ATCC BAA-918 / JCM 12380 / KOD1) (Pyrococcus kodakaraensis (strain KOD1))).